A 157-amino-acid polypeptide reads, in one-letter code: Large ribosomal subunit protein eL29 (157 aa).

Residues 1–26 (MAKSKNHTTHNQSRKWHRNGIKKPRS) show a composition bias toward basic residues. The segment at 1 to 32 (MAKSKNHTTHNQSRKWHRNGIKKPRSQRYESL) is disordered. Lys5 is subject to N6-methyllysine. Ser31 is subject to Phosphoserine. Lys33 carries the N6-acetyllysine modification. Positions 121–157 (PKAKAKAKDQTKAQAAAPASIPAQAPKGAQATTKATE) are disordered. Low complexity predominate over residues 132–147 (KAQAAAPASIPAQAPK). The residue at position 140 (Ser140) is a Phosphoserine.

This sequence belongs to the eukaryotic ribosomal protein eL29 family. As to quaternary structure, component of the large ribosomal subunit.

Its subcellular location is the cytoplasm. Its function is as follows. Component of the large ribosomal subunit. The ribosome is a large ribonucleoprotein complex responsible for the synthesis of proteins in the cell. The polypeptide is Large ribosomal subunit protein eL29 (RPL29) (Macaca fascicularis (Crab-eating macaque)).